A 584-amino-acid polypeptide reads, in one-letter code: MNNHIEALSYYLGAFVDELTRLNVCDVVISPGSRSTPIALLMEQHEGMNTYLHVDERSAGFFALGIAKAKKRPVALLCTSGTAAANYYPAVCEAFHSRVPLIVLTADRPHELRDVGAPQAMNQINLYGTFVKQFTEMAIPEANEAMYHYARMTTQRMIASALLAPQGPVHLNFPVREPLIPDFSLESLWDKGRGEYTGVVQRGNAVMPSEYVDSLVGRLSHMEKGLIICGDDSHSEIATFATQLAEKTGYPILADPLSNIRSGHHDKTMVIDCYDTFLRNVLLKETWKPEVIIRFGGMPVSKALTQFIKKQTKAVHIVVDESGQWRDPALVATEVVQASDIAFCSALIEKMPVMKKNDWSQMWQHINEKTKETLREMETYDTAFEGRVITDIVRVLPEGATLFASNSMPIRDTDSFFFTSDKNIQVMANRGVNGIDGIISTALGASMICDPLVLVIGDLSFYHDLNGLLAAKLHELNITIVVVNNDGGGIFSFLPQYEKKEHFESLFGTPIGLDYEHVVNMYGGSFSRVNGWEQFREEVQKGTTTEGLHVVEICTNRDENLTLHRTLWAKTQDVITTSLQGESK.

The protein belongs to the TPP enzyme family. MenD subfamily. As to quaternary structure, homodimer. The cofactor is Mg(2+). Requires Mn(2+) as cofactor. It depends on thiamine diphosphate as a cofactor.

The catalysed reaction is isochorismate + 2-oxoglutarate + H(+) = 5-enolpyruvoyl-6-hydroxy-2-succinyl-cyclohex-3-ene-1-carboxylate + CO2. Its pathway is quinol/quinone metabolism; 1,4-dihydroxy-2-naphthoate biosynthesis; 1,4-dihydroxy-2-naphthoate from chorismate: step 2/7. The protein operates within quinol/quinone metabolism; menaquinone biosynthesis. Catalyzes the thiamine diphosphate-dependent decarboxylation of 2-oxoglutarate and the subsequent addition of the resulting succinic semialdehyde-thiamine pyrophosphate anion to isochorismate to yield 2-succinyl-5-enolpyruvyl-6-hydroxy-3-cyclohexene-1-carboxylate (SEPHCHC). This Bacillus cereus (strain ATCC 10987 / NRS 248) protein is 2-succinyl-5-enolpyruvyl-6-hydroxy-3-cyclohexene-1-carboxylate synthase.